Here is a 669-residue protein sequence, read N- to C-terminus: Elongation factor G 2 (669 aa).

Residues 1–276 form the tr-type G domain; it reads MGIRNIGIMA…SIVDYLPSPF (276 aa). GTP-binding positions include 10–17, 74–78, and 128–131; these read AHIDAGKT, DTPGH, and NKMD.

The protein belongs to the TRAFAC class translation factor GTPase superfamily. Classic translation factor GTPase family. EF-G/EF-2 subfamily.

It localises to the cytoplasm. Functionally, catalyzes the GTP-dependent ribosomal translocation step during translation elongation. During this step, the ribosome changes from the pre-translocational (PRE) to the post-translocational (POST) state as the newly formed A-site-bound peptidyl-tRNA and P-site-bound deacylated tRNA move to the P and E sites, respectively. Catalyzes the coordinated movement of the two tRNA molecules, the mRNA and conformational changes in the ribosome. This chain is Elongation factor G 2 (fusA2), found in Borreliella afzelii (strain PKo) (Borrelia afzelii).